A 114-amino-acid polypeptide reads, in one-letter code: Biofilm growth-associated repressor (114 aa).

The region spanning 17 to 111 (DMEKRANEVA…ALYTIFCAQE (95 aa)) is the HTH arsR-type domain. The segment at residues 51–74 (VGELEQQIGIGQPTLSQQLGVLRE) is a DNA-binding region (H-T-H motif).

Represses an operon that comprises itself, XF_0764, XF_0765, XF_0766 and blh. Binds to a palindromic AT-rich sequence spanning the -10 region of the blh promoter and blocks transcription of the operon. This Xylella fastidiosa (strain 9a5c) protein is Biofilm growth-associated repressor (bigR).